The following is a 368-amino-acid chain: MPFLWLCWALWALSLVSLREALTGEQILGSLLQQLQLDQPPVLDKADVEGMVIPSHVRTQYVALLQHSHASRSRGKRFSQNLREVAGRFLVSETSTHLLVFGMEQRLPPNSELVQAVLRLFQEPVPRTALRRQKRLSPHSARARVTIEWLRFRDDGSNRTALIDSRLVSIHESGWKAFDVTEAVNFWQQLSRPRQPLLLQVSVQREHLGPGTWSSHKLVRFAAQGTPDGKGQGEPQLELHTLDLKDYGAQGNCDPEAPVTEGTRCCRQEMYLDLQGMKWAENWILEPPGFLTYECVGSCLQLPESLTSRWPFLGPRQCVASEMTSLPMIVSVKEGGRTRPQVVSLPNMRVQTCSCASDGALIPRRLQP.

An N-terminal signal peptide occupies residues 1–21 (MPFLWLCWALWALSLVSLREA). Positions 22–76 (LTGEQILGSLLQQLQLDQPPVLDKADVEGMVIPSHVRTQYVALLQHSHASRSRGK) are cleaved as a propeptide — or 135. A glycan (N-linked (GlcNAc...) asparagine) is linked at Asn-158. Cystine bridges form between Cys-253–Cys-266, Cys-265–Cys-318, Cys-295–Cys-353, and Cys-299–Cys-355.

This sequence belongs to the TGF-beta family. In terms of processing, the processing of the protein may also occur at the second R-X-X-R site located at AA 132-135. Processing appears to be regulated in a cell-type specific manner.

The protein resides in the secreted. Functionally, required for left-right axis determination as a regulator of LEFTY2 and NODAL. The polypeptide is Left-right determination factor 1 (Lefty1) (Mus musculus (Mouse)).